Here is a 671-residue protein sequence, read N- to C-terminus: DNA ligase (671 aa).

Residues 32–36, 81–82, and E113 each bind NAD(+); these read DAEYD and SL. K115 acts as the N6-AMP-lysine intermediate in catalysis. NAD(+)-binding residues include R136, E173, K290, and K314. 4 residues coordinate Zn(2+): C408, C411, C426, and C432. A BRCT domain is found at 593–671; it reads EIDSPFAGKT…EAEMLRLLGS (79 aa).

This sequence belongs to the NAD-dependent DNA ligase family. LigA subfamily. Requires Mg(2+) as cofactor. Mn(2+) is required as a cofactor.

It catalyses the reaction NAD(+) + (deoxyribonucleotide)n-3'-hydroxyl + 5'-phospho-(deoxyribonucleotide)m = (deoxyribonucleotide)n+m + AMP + beta-nicotinamide D-nucleotide.. In terms of biological role, DNA ligase that catalyzes the formation of phosphodiester linkages between 5'-phosphoryl and 3'-hydroxyl groups in double-stranded DNA using NAD as a coenzyme and as the energy source for the reaction. It is essential for DNA replication and repair of damaged DNA. The chain is DNA ligase from Escherichia coli O157:H7.